A 216-amino-acid chain; its full sequence is Pyrophosphatase PpaX (216 aa).

The Nucleophile role is filled by aspartate 12.

This sequence belongs to the HAD-like hydrolase superfamily. PpaX family. Mg(2+) serves as cofactor.

The catalysed reaction is diphosphate + H2O = 2 phosphate + H(+). Functionally, hydrolyzes pyrophosphate formed during P-Ser-HPr dephosphorylation by HPrK/P. Might play a role in controlling the intracellular pyrophosphate pool. This is Pyrophosphatase PpaX from Bacillus velezensis (strain DSM 23117 / BGSC 10A6 / LMG 26770 / FZB42) (Bacillus amyloliquefaciens subsp. plantarum).